The sequence spans 132 residues: Fluoride-specific ion channel FluC 1 (132 aa).

4 helical membrane passes run 9–29, 35–55, 72–89, and 100–120; these read LAAVFAGGALGSLARAALSAL, ASWPWPTFTVNIVGAFLVGYF, LLGTGFCGGLTTFSTMQV, and WGLAAGYTLTSIAAGLLAVHL. Na(+) is bound by residues glycine 79 and threonine 82.

This sequence belongs to the fluoride channel Fluc/FEX (TC 1.A.43) family.

It is found in the cell membrane. The catalysed reaction is fluoride(in) = fluoride(out). Its activity is regulated as follows. Na(+) is not transported, but it plays an essential structural role and its presence is essential for fluoride channel function. In terms of biological role, fluoride-specific ion channel. Important for reducing fluoride concentration in the cell, thus reducing its toxicity. The protein is Fluoride-specific ion channel FluC 1 of Mycolicibacterium paratuberculosis (strain ATCC BAA-968 / K-10) (Mycobacterium paratuberculosis).